We begin with the raw amino-acid sequence, 1130 residues long: ABC transporter ATM1 (1130 aa).

A mitochondrion-targeting transit peptide spans 1–65 (MQPPTRAPFF…ESFHSSAFQL (65 aa)). Disordered regions lie at residues 191-212 (DAWTSGCSGQTDNATASPCVRP), 276-315 (HHAPLSRHSLQSLPESRIRGGTVSRGDSPGSLTLSPRNMS), and 341-385 (STFS…TSSP). Composition is skewed to polar residues over residues 195–206 (SGCSGQTDNATA) and 305–315 (GSLTLSPRNMS). Residues 406-426 (PNPTSLQLLFSLFPFLWPTAL) traverse the membrane as a helical segment. Residues 468-502 (PLSPSGASPSSGDTSLLASSGETSSSLSPSAAPAE) show a composition bias toward low complexity. The segment at 468–554 (PLSPSGASPS…AGKAGTSVGG (87 aa)) is disordered. A compositionally biased stretch (basic and acidic residues) spans 503-523 (GAREAGKSGESAGRERRDEGS). 5 helical membrane passes run 574 to 594 (IVSVPLGVVCGFPVARIAATG), 653 to 673 (VLLFQMVPTALEFALVLYLLG), 678 to 698 (GPVACITSLTMAVYVAFTAAV), 761 to 781 (LAFLNFGQQLIFNVGVLGSLA), and 791 to 811 (LLPVGHIVLVSSLLLQLAVPL). Positions 587-823 (VARIAATGFN…VGTIYRETSL (237 aa)) constitute an ABC transmembrane type-1 domain. One can recognise an ABC transporter domain in the interval 857–1111 (VAFENVRFAY…ERGLYRALWE (255 aa)). ATP is bound at residue 910–917 (GPSGVGKS).

This sequence belongs to the ABC transporter superfamily. ABCB family. Heavy Metal importer (TC 3.A.1.210) subfamily. As to quaternary structure, homodimer.

It localises to the mitochondrion membrane. Its function is as follows. Probably transports iron-sulfur clusters in an ATP-dependent manner. Plays a role in [Fe-S] proteins homeostasis. Required for optimal parasite growth and lytic cycle. This Toxoplasma gondii (strain ATCC 50611 / Me49) protein is ABC transporter ATM1.